A 458-amino-acid chain; its full sequence is Chitin deacetylase 2 (458 aa).

The first 51 residues, Met-1–Ala-51, serve as a signal peptide directing secretion. N-linked (GlcNAc...) asparagine glycans are attached at residues Asn-87, Asn-99, and Asn-125. Positions Met-158–Pro-348 constitute a NodB homology domain. Asp-165 serves as the catalytic Proton acceptor. Asp-165 serves as a coordination point for acetate. Asp-166 is a Co(2+) binding site. Asn-169 carries an N-linked (GlcNAc...) asparagine glycan. Residues His-215 and His-219 each contribute to the Co(2+) site. Tyr-256 is an acetate binding site. N-linked (GlcNAc...) asparagine glycans are attached at residues Asn-271 and Asn-309. Residue His-322 is the Proton donor of the active site. Residues Asn-326, Asn-354, Asn-363, Asn-378, and Asn-393 are each glycosylated (N-linked (GlcNAc...) asparagine). The disordered stretch occupies residues Ser-382 to Ala-430. Ser-427 carries GPI-anchor amidated serine lipidation. Residues Ser-428–Leu-458 constitute a propeptide, removed in mature form. A glycan (N-linked (GlcNAc...) asparagine) is linked at Asn-429.

This sequence belongs to the polysaccharide deacetylase family. Co(2+) is required as a cofactor. Glycosylated.

It localises to the secreted. The protein localises to the cell wall. The protein resides in the cell membrane. The enzyme catalyses [(1-&gt;4)-N-acetyl-beta-D-glucosaminyl](n) + n H2O = chitosan + n acetate. Functionally, hydrolyzes the N-acetamido groups of N-acetyl-D-glucosamine residues in chitin to form chitosan and acetate. Chitosan is required to anchor melanin to the cell wall, for maintenance of cell wall integrity, and for cytokinesis. This Cryptococcus neoformans var. neoformans serotype D (strain B-3501A) (Filobasidiella neoformans) protein is Chitin deacetylase 2.